Consider the following 379-residue polypeptide: UDP-4-amino-4-deoxy-L-arabinose--oxoglutarate aminotransferase (379 aa).

An N6-(pyridoxal phosphate)lysine modification is found at K182.

The protein belongs to the DegT/DnrJ/EryC1 family. ArnB subfamily. In terms of assembly, homodimer. The cofactor is pyridoxal 5'-phosphate.

The catalysed reaction is UDP-4-amino-4-deoxy-beta-L-arabinose + 2-oxoglutarate = UDP-beta-L-threo-pentopyranos-4-ulose + L-glutamate. It participates in nucleotide-sugar biosynthesis; UDP-4-deoxy-4-formamido-beta-L-arabinose biosynthesis; UDP-4-deoxy-4-formamido-beta-L-arabinose from UDP-alpha-D-glucuronate: step 2/3. Its pathway is bacterial outer membrane biogenesis; lipopolysaccharide biosynthesis. Functionally, catalyzes the conversion of UDP-4-keto-arabinose (UDP-Ara4O) to UDP-4-amino-4-deoxy-L-arabinose (UDP-L-Ara4N). The modified arabinose is attached to lipid A and is required for resistance to polymyxin and cationic antimicrobial peptides. This Salmonella paratyphi A (strain ATCC 9150 / SARB42) protein is UDP-4-amino-4-deoxy-L-arabinose--oxoglutarate aminotransferase.